Here is a 201-residue protein sequence, read N- to C-terminus: dCTP deaminase, dUMP-forming (201 aa).

DCTP contacts are provided by residues 101–106, aspartate 119, 127–129, glutamine 148, tyrosine 162, and glutamine 174; these read KSSLGR and TLE. Glutamate 129 serves as the catalytic Proton donor/acceptor.

The protein belongs to the dCTP deaminase family. In terms of assembly, homotrimer.

It carries out the reaction dCTP + 2 H2O = dUMP + NH4(+) + diphosphate. The protein operates within pyrimidine metabolism; dUMP biosynthesis; dUMP from dCTP: step 1/1. Bifunctional enzyme that catalyzes both the deamination of dCTP to dUTP and the hydrolysis of dUTP to dUMP without releasing the toxic dUTP intermediate. The sequence is that of dCTP deaminase, dUMP-forming from Parafrankia sp. (strain EAN1pec).